The sequence spans 180 residues: MSFKGTTVIAIRRGGKTVVAADGQVTFGYTVLKSNAIKIRKLFNGKILAGFAGSTSDAITLFEKFEEKVKAREDGIIDIKRAAVELAKDWRSDKILHKLEAMMLVADSENILLISGTGDVVEPEEDVISIGSGGNYAYSAALAYMENKKLSAADIAFKSLKVAARVCIYTNSNIVLEEIS.

Residue Thr6 is part of the active site. The Na(+) site is built by Ala164, Cys167, and Thr170.

This sequence belongs to the peptidase T1B family. HslV subfamily. In terms of assembly, a double ring-shaped homohexamer of HslV is capped on each side by a ring-shaped HslU homohexamer. The assembly of the HslU/HslV complex is dependent on binding of ATP.

The protein resides in the cytoplasm. It catalyses the reaction ATP-dependent cleavage of peptide bonds with broad specificity.. With respect to regulation, allosterically activated by HslU binding. Its function is as follows. Protease subunit of a proteasome-like degradation complex believed to be a general protein degrading machinery. This chain is ATP-dependent protease subunit HslV, found in Borrelia turicatae (strain 91E135).